We begin with the raw amino-acid sequence, 451 residues long: Phenylalanine--tRNA ligase, mitochondrial (451 aa).

Residues 157–160 (SAHQ), Arg179, 186–188 (QHY), and 193–195 (QLE) each bind substrate. The residue at position 202 (Lys202) is an N6-acetyllysine. 2 residues coordinate substrate: Glu287 and Phe312. The 93-residue stretch at 358 to 450 (SKYPAVFNDI…AVQLLGVEGR (93 aa)) folds into the FDX-ACB domain.

This sequence belongs to the class-II aminoacyl-tRNA synthetase family. As to quaternary structure, monomer.

The protein resides in the mitochondrion matrix. Its subcellular location is the mitochondrion. It catalyses the reaction tRNA(Phe) + L-phenylalanine + ATP = L-phenylalanyl-tRNA(Phe) + AMP + diphosphate + H(+). Functionally, is responsible for the charging of tRNA(Phe) with phenylalanine in mitochondrial translation. To a lesser extent, also catalyzes direct attachment of m-Tyr (an oxidized version of Phe) to tRNA(Phe), thereby opening the way for delivery of the misacylated tRNA to the ribosome and incorporation of ROS-damaged amino acid into proteins. This Mus musculus (Mouse) protein is Phenylalanine--tRNA ligase, mitochondrial (Fars2).